Here is a 328-residue protein sequence, read N- to C-terminus: Tetraacyldisaccharide 4'-kinase (328 aa).

Residue 59 to 66 (TAGGNGKT) coordinates ATP.

This sequence belongs to the LpxK family.

The enzyme catalyses a lipid A disaccharide + ATP = a lipid IVA + ADP + H(+). It functions in the pathway glycolipid biosynthesis; lipid IV(A) biosynthesis; lipid IV(A) from (3R)-3-hydroxytetradecanoyl-[acyl-carrier-protein] and UDP-N-acetyl-alpha-D-glucosamine: step 6/6. Its function is as follows. Transfers the gamma-phosphate of ATP to the 4'-position of a tetraacyldisaccharide 1-phosphate intermediate (termed DS-1-P) to form tetraacyldisaccharide 1,4'-bis-phosphate (lipid IVA). The polypeptide is Tetraacyldisaccharide 4'-kinase (Aliivibrio fischeri (strain MJ11) (Vibrio fischeri)).